The following is a 225-amino-acid chain: Isoprenyl transferase 1 (225 aa).

D3 is an active-site residue. D3 contributes to the Mg(2+) binding site. Substrate is bound by residues 4–7 (GNRR), W8, H21, and 49–51 (SME). Residue N52 is the Proton acceptor of the active site. Substrate contacts are provided by residues R55, R174, and 180–182 (RLS). E193 lines the Mg(2+) pocket.

This sequence belongs to the UPP synthase family. As to quaternary structure, homodimer. Mg(2+) is required as a cofactor.

Catalyzes the condensation of isopentenyl diphosphate (IPP) with allylic pyrophosphates generating different type of terpenoids. In Corynebacterium glutamicum (strain ATCC 13032 / DSM 20300 / JCM 1318 / BCRC 11384 / CCUG 27702 / LMG 3730 / NBRC 12168 / NCIMB 10025 / NRRL B-2784 / 534), this protein is Isoprenyl transferase 1.